A 298-amino-acid polypeptide reads, in one-letter code: ATP synthase gamma chain (298 aa).

The protein belongs to the ATPase gamma chain family. As to quaternary structure, F-type ATPases have 2 components, CF(1) - the catalytic core - and CF(0) - the membrane proton channel. CF(1) has five subunits: alpha(3), beta(3), gamma(1), delta(1), epsilon(1). CF(0) has three main subunits: a, b and c.

It is found in the cell membrane. Produces ATP from ADP in the presence of a proton gradient across the membrane. The gamma chain is believed to be important in regulating ATPase activity and the flow of protons through the CF(0) complex. This is ATP synthase gamma chain from Parafrankia sp. (strain EAN1pec).